A 330-amino-acid chain; its full sequence is Aspartate--ammonia ligase (330 aa).

Belongs to the class-II aminoacyl-tRNA synthetase family. AsnA subfamily.

Its subcellular location is the cytoplasm. It catalyses the reaction L-aspartate + NH4(+) + ATP = L-asparagine + AMP + diphosphate + H(+). It participates in amino-acid biosynthesis; L-asparagine biosynthesis; L-asparagine from L-aspartate (ammonia route): step 1/1. The polypeptide is Aspartate--ammonia ligase (Mannheimia succiniciproducens (strain KCTC 0769BP / MBEL55E)).